Here is a 67-residue protein sequence, read N- to C-terminus: Small ribosomal subunit protein eS31 (67 aa).

Cysteine 31, cysteine 34, cysteine 49, and cysteine 52 together coordinate Zn(2+). A C4-type zinc finger spans residues 31-52 (CPKCGAGVFMAEHLNRFACGKC).

It belongs to the eukaryotic ribosomal protein eS31 family. Part of the 30S ribosomal subunit. Zn(2+) is required as a cofactor.

The polypeptide is Small ribosomal subunit protein eS31 (Methanococcus maripaludis (strain DSM 14266 / JCM 13030 / NBRC 101832 / S2 / LL)).